Reading from the N-terminus, the 417-residue chain is Solanesyl diphosphate synthase 2, chloroplastic (417 aa).

Residues 1–60 constitute a chloroplast transit peptide; that stretch reads MMMSCRNIDLGTSVLDHSCSSSSTSRRFLFGNSSKTVCMIGGRSCVGNLVFLRRDLATCR. K137, R140, and H175 together coordinate isopentenyl diphosphate. Residues D182 and D186 each coordinate Mg(2+). R191 is a binding site for an all-trans-polyprenyl diphosphate. R192 contacts isopentenyl diphosphate. Positions 268, 269, 306, and 323 each coordinate an all-trans-polyprenyl diphosphate.

The protein belongs to the FPP/GGPP synthase family. Homodimer. Interacts with FBN5. Requires Mg(2+) as cofactor. Higher expression in leaves than in roots.

Its subcellular location is the plastid. The protein resides in the chloroplast. The catalysed reaction is 5 isopentenyl diphosphate + (2E,6E,10E)-geranylgeranyl diphosphate = all-trans-nonaprenyl diphosphate + 5 diphosphate. Functionally, involved in providing solanesyl diphosphate for plastoquinone-9 (PQ-9) formation in plastids. Catalyzes the elongation of the prenyl side chain of PQ-9 in plastids. Contributes to the biosynthesis of plastochromanol-8 (PC-8) in plastids. Does not contribute to the synthesis of tocopherol or ubiquinone. PQ-9 and PC-8 are lipophilic antioxidants that act as protectant against photooxidative stress under high light stress conditions. Prefers geranylgeranyl diphosphate to farnesyl diphosphate as substrate. No activity with geranyl diphosphate or dimethylallyl diphosphate as substrate. This is Solanesyl diphosphate synthase 2, chloroplastic from Arabidopsis thaliana (Mouse-ear cress).